The chain runs to 308 residues: UDP-N-acetylenolpyruvoylglucosamine reductase (308 aa).

Positions 32–197 (QTGGKADYYL…LEAAFTLAPG (166 aa)) constitute an FAD-binding PCMH-type domain. Residue Arg176 is part of the active site. The active-site Proton donor is Ser226. Glu296 is a catalytic residue.

Belongs to the MurB family. Requires FAD as cofactor.

It is found in the cytoplasm. It carries out the reaction UDP-N-acetyl-alpha-D-muramate + NADP(+) = UDP-N-acetyl-3-O-(1-carboxyvinyl)-alpha-D-glucosamine + NADPH + H(+). The protein operates within cell wall biogenesis; peptidoglycan biosynthesis. In terms of biological role, cell wall formation. The protein is UDP-N-acetylenolpyruvoylglucosamine reductase of Staphylococcus saprophyticus subsp. saprophyticus (strain ATCC 15305 / DSM 20229 / NCIMB 8711 / NCTC 7292 / S-41).